The chain runs to 30 residues: Cyclotide hyen-L (30 aa).

The segment at residues 1–30 (GIPCAESCVYIPCTVTALLGCSCSDKVCYN) is a cross-link (cyclopeptide (Gly-Asn)). Cystine bridges form between Cys4/Cys21, Cys8/Cys23, and Cys13/Cys28.

In terms of processing, this is a cyclic peptide. Detected in stems (at protein level).

Probably participates in a plant defense mechanism. Has cytotoxic activity against HUVEC cells (LC(50)= 2.26 uM) and various cancer cells including HeLa (LC(50)= 3.48 uM), MCF-7 and K562. Displays very weak hemolytic activity. Binds to and induces leakage in phospholipd membranes, particularly ones containing 1-palmitoyl-2-oleophosphatidylethanolamine (POPE). In Pigea enneasperma (Spade flower), this protein is Cyclotide hyen-L.